We begin with the raw amino-acid sequence, 352 residues long: Divinyl chlorophyll a/b light-harvesting protein PcbB (352 aa).

The next 6 helical transmembrane spans lie at 27–47 (FIAA…AFTL), 89–109 (CTVI…GGIL), 142–162 (FILG…VEWA), 203–223 (VMGG…FHII), 243–263 (AVLS…AFWS), and 307–327 (LANV…WHAL).

This sequence belongs to the PsbB/PsbC family. IsiA/Pcb subfamily. As to quaternary structure, the antenna complex consists of divinyl chlorophylls (a and b) and divinyl chlorophyll a/b binding proteins and binds more divinyl chlorophyll b than does the antenna complex from high-light-adapted Prochlorococcus. The cofactor is divinyl chlorophyll a. Requires divinyl chlorophyll b as cofactor.

The protein localises to the cellular thylakoid membrane. Functionally, the antenna complex functions as a light receptor, it captures and delivers excitation energy to photosystems II and I. The Prochlorales pcb genes are not related to higher plant LHCs. The chain is Divinyl chlorophyll a/b light-harvesting protein PcbB (pcbB) from Prochlorococcus marinus (strain NATL2A).